We begin with the raw amino-acid sequence, 918 residues long: Isoleucine--tRNA ligase (918 aa).

The short motif at 57–67 is the 'HIGH' region element; the sequence is PYANGHIHIGH. Glu-564 lines the L-isoleucyl-5'-AMP pocket. Positions 605–609 match the 'KMSKS' region motif; the sequence is KMSKS. Lys-608 serves as a coordination point for ATP. 4 residues coordinate Zn(2+): Cys-888, Cys-891, Cys-903, and Cys-906.

The protein belongs to the class-I aminoacyl-tRNA synthetase family. IleS type 1 subfamily. In terms of assembly, monomer. Requires Zn(2+) as cofactor.

It localises to the cytoplasm. The enzyme catalyses tRNA(Ile) + L-isoleucine + ATP = L-isoleucyl-tRNA(Ile) + AMP + diphosphate. Catalyzes the attachment of isoleucine to tRNA(Ile). As IleRS can inadvertently accommodate and process structurally similar amino acids such as valine, to avoid such errors it has two additional distinct tRNA(Ile)-dependent editing activities. One activity is designated as 'pretransfer' editing and involves the hydrolysis of activated Val-AMP. The other activity is designated 'posttransfer' editing and involves deacylation of mischarged Val-tRNA(Ile). This Nitratiruptor sp. (strain SB155-2) protein is Isoleucine--tRNA ligase.